The primary structure comprises 508 residues: E3 ubiquitin-protein ligase XBAT32 (508 aa).

5 ANK repeats span residues 50–79, 83–112, 117–147, 177–206, and 220–249; these read VRNS…DINL, RGQT…NIHR, NGGT…SVPN, GGIT…SVTQ, and AGST…CLAA. Residues 321–372 form an RING-type zinc finger; that stretch reads CAVCLERKCTVAADGCAHEFCTNCALYLSTTSITSSKTSNVTPGSVPCPLCR.

In terms of assembly, interacts with ACS4 and ACS7. As to expression, expressed in the vascular system of primary root, vascular tissue of leaves, stems and anthers.

The enzyme catalyses S-ubiquitinyl-[E2 ubiquitin-conjugating enzyme]-L-cysteine + [acceptor protein]-L-lysine = [E2 ubiquitin-conjugating enzyme]-L-cysteine + N(6)-ubiquitinyl-[acceptor protein]-L-lysine.. Its pathway is protein modification; protein ubiquitination. Its function is as follows. E3 ubiquitin-protein ligase that mediates ubiquitination of ACC synthases (ACS). Negatively regulates ethylene biosynthesis probably via ubiquitin-dependent degradation of ACS4 and ACS7 enzymes. Regulates lateral root formation and development by controlling ethylene production which inhibits lateral root formation at high concentration. The protein is E3 ubiquitin-protein ligase XBAT32 (XBAT32) of Arabidopsis thaliana (Mouse-ear cress).